The chain runs to 227 residues: Small heat shock protein hspG3 (227 aa).

One can recognise a sHSP domain in the interval 31-227 (NKRVDIIPSM…SSNTIKININ (197 aa)). The interval 119-164 (QQQQLENSNKENDEPSIEEFEEDVKSKSELNKTTLNTTENKDEDKT) is disordered.

It belongs to the small heat shock protein (HSP20) family.

The chain is Small heat shock protein hspG3 (hspG3) from Dictyostelium discoideum (Social amoeba).